Consider the following 37-residue polypeptide: Large ribosomal subunit protein bL36c (37 aa).

The protein belongs to the bacterial ribosomal protein bL36 family.

The protein resides in the plastid. Its subcellular location is the chloroplast. This is Large ribosomal subunit protein bL36c from Nicotiana tomentosiformis (Tobacco).